The sequence spans 766 residues: Polyribonucleotide nucleotidyltransferase (766 aa).

The Mg(2+) site is built by Asp-490 and Asp-496. Positions 557 to 616 constitute a KH domain; the sequence is PKIDTITIPVDKIKVVIGKGGEQIDKIIAETGVKIDIDDEGLCSIFSSDQSAIDRAKEII. In terms of domain architecture, S1 motif spans 626–694; sequence GEVYEAKVVR…DKGRVDASMR (69 aa). 2 stretches are compositionally biased toward basic and acidic residues: residues 700 to 734 and 744 to 766; these read PEGYVEPERKPRERRDNKDRRNGNGFDRRNNDRNN and FELRERKSHVDHEFPELSTKKPE. A disordered region spans residues 700-766; that stretch reads PEGYVEPERK…FPELSTKKPE (67 aa).

Belongs to the polyribonucleotide nucleotidyltransferase family. Mg(2+) serves as cofactor.

The protein resides in the cytoplasm. The catalysed reaction is RNA(n+1) + phosphate = RNA(n) + a ribonucleoside 5'-diphosphate. In terms of biological role, involved in mRNA degradation. Catalyzes the phosphorolysis of single-stranded polyribonucleotides processively in the 3'- to 5'-direction. In Lactococcus lactis subsp. cremoris (strain MG1363), this protein is Polyribonucleotide nucleotidyltransferase.